Reading from the N-terminus, the 506-residue chain is Maturase K (506 aa).

The protein belongs to the intron maturase 2 family. MatK subfamily.

Its subcellular location is the plastid. The protein resides in the chloroplast. Functionally, usually encoded in the trnK tRNA gene intron. Probably assists in splicing its own and other chloroplast group II introns. The protein is Maturase K of Hydrangea macrophylla (Bigleaf hydrangea).